The following is a 241-amino-acid chain: Tetrahydromethanopterin S-methyltransferase subunit A (241 aa).

Residues 1-220 (MAEKKEPAEG…HSGVLAGKIE (220 aa)) lie on the Cytoplasmic side of the membrane. Histidine 85 contributes to the 5-hydroxybenzimidazolylcob(I)amide binding site. Residues 221–241 (GIMVGLVLSLFVLGLLLFGGM) traverse the membrane as a helical segment.

It belongs to the MtrA family. As to quaternary structure, the complex is composed of 8 subunits; MtrA, MtrB, MtrC, MtrD, MtrE, MtrF, MtrG and MtrH. 5-hydroxybenzimidazolylcob(I)amide is required as a cofactor.

It is found in the cell membrane. It carries out the reaction 5-methyl-5,6,7,8-tetrahydromethanopterin + coenzyme M + 2 Na(+)(in) = 5,6,7,8-tetrahydromethanopterin + methyl-coenzyme M + 2 Na(+)(out). It participates in one-carbon metabolism; methanogenesis from CO(2); methyl-coenzyme M from 5,10-methylene-5,6,7,8-tetrahydromethanopterin: step 2/2. Functionally, part of a complex that catalyzes the formation of methyl-coenzyme M and tetrahydromethanopterin from coenzyme M and methyl-tetrahydromethanopterin. This is an energy-conserving, sodium-ion translocating step. This chain is Tetrahydromethanopterin S-methyltransferase subunit A, found in Methanohalobium evestigatum (strain ATCC BAA-1072 / DSM 3721 / NBRC 107634 / OCM 161 / Z-7303).